A 681-amino-acid chain; its full sequence is MTASPDYLVVLFGITAGATGAKLGSDEKELILLFWKVVDLANKKVGQLHEVLVRPDQLELTEDCKEETKIDVESLSSASQLDQALRQFNQSVSNELNIGVGTSFCLCTDGQLHVRQILHPEASKKNVLLPECFYSFFDLRKEFKKCCPGSPDIDKLDVATMTEYLNFEKSSSVSRYGASQVEDMGNIILAMISEPYNHRFSDPERVNYKFESGTCSKMELIDDNTVVRARGLPWQSSDQDIARFFKGLNIAKGGAALCLNAQGRRNGEALVRFVSEEHRDLALQRHKHHMGTRYIEVYKATGEDFLKIAGGTSNEVAQFLSKENQVIVRMRGLPFTATAEEVVAFFGQHCPITGGKEGILFVTYPDGRPTGDAFVLFACEEYAQNALRKHKDLLGKRYIELFRSTAAEVQQVLNRFSSAPLIPLPTPPIIPVLPQQFVPPTNVRDCIRLRGLPYAATIEDILDFLGEFATDIRTHGVHMVLNHQGRPSGDAFIQMKSADRAFMAAQKCHKKNMKDRYVEVFQCSAEEMNFVLMGGTLNRNGLSPPPCKLPCLSPPSYTFPAPAAVIPTEAAIYQPSVILNPRALQPSTAYYPAGTQLFMNYTAYYPSPPGSPNSLGYFPTAANLSGVPPQPGTVVRMQGLAYNTGVKEILNFFQGYQYATEDGLIHTNDQARTLPKEWVCI.

3 consecutive RRM domains span residues 225-302 (TVVR…KATG), 326-406 (VIVR…RSTA), and 445-525 (DCIR…QCSA). A Phosphoserine modification is found at S543. R582 is modified (omega-N-methylarginine).

The protein belongs to the ESRP family. Epithelial cell-specific.

It is found in the nucleus. Its function is as follows. mRNA splicing factor that regulates the formation of epithelial cell-specific isoforms. Specifically regulates the expression of FGFR2-IIIb, an epithelial cell-specific isoform of FGFR2. Also regulates the splicing of CD44, CTNND1, ENAH, 3 transcripts that undergo changes in splicing during the epithelial-to-mesenchymal transition (EMT). Acts by directly binding specific sequences in mRNAs. Binds the GU-rich sequence motifs in the ISE/ISS-3, a cis-element regulatory region present in the mRNA of FGFR2. Regulates splicing and expression of genes involved in inner ear development, auditory hair cell differentiation, and cell fate specification in the cochlear epithelium. The polypeptide is Epithelial splicing regulatory protein 1 (ESRP1) (Homo sapiens (Human)).